The chain runs to 283 residues: Aquaporin PIP2-5 (283 aa).

Transmembrane regions (helical) follow at residues 37 to 57 (AVIA…ATVI) and 74 to 94 (CGGV…FILV). An NPA 1 motif is present at residues 106 to 108 (NPA). The next 3 membrane-spanning stretches (helical) occupy residues 125 to 145 (ILYI…VKGF), 167 to 187 (GTGL…VFSA), and 199 to 219 (VPVL…LATI). The short motif at 227 to 229 (NPA) is the NPA 2 element. A helical membrane pass occupies residues 249-269 (IFWVGPFIGAAIAALYHQIVL).

The protein belongs to the MIP/aquaporin (TC 1.A.8) family. PIP (TC 1.A.8.11) subfamily. As to expression, expressed in roots.

It is found in the cell membrane. Functionally, water channel required to facilitate the transport of water across cell membrane. May play a role in root water uptake. This Oryza sativa subsp. japonica (Rice) protein is Aquaporin PIP2-5 (PIP2-5).